We begin with the raw amino-acid sequence, 390 residues long: Probable purine permease 10 (390 aa).

10 helical membrane passes run 44 to 64 (WLRV…ATIL), 78 to 98 (LATV…ILSF), 117 to 137 (VLVY…YSIG), 140 to 160 (YLPV…NAFF), 169 to 189 (LTPI…LLAF), 204 to 224 (YVKG…VLSL), 241 to 261 (VMDM…VGLF), 287 to 307 (LVWT…LIFE), 312 to 332 (FSNA…VIIF), and 336 to 356 (MNGL…SYVY). The disordered stretch occupies residues 370–390 (EITTTESPDPPEAEESTWQSK).

Belongs to the purine permeases (TC 2.A.7.14) family.

Its subcellular location is the membrane. This chain is Probable purine permease 10 (PUP10), found in Arabidopsis thaliana (Mouse-ear cress).